The sequence spans 393 residues: NAD(P)H-quinone oxidoreductase subunit H, chloroplastic (393 aa).

It belongs to the complex I 49 kDa subunit family. In terms of assembly, NDH is composed of at least 16 different subunits, 5 of which are encoded in the nucleus.

It is found in the plastid. It localises to the chloroplast thylakoid membrane. It catalyses the reaction a plastoquinone + NADH + (n+1) H(+)(in) = a plastoquinol + NAD(+) + n H(+)(out). It carries out the reaction a plastoquinone + NADPH + (n+1) H(+)(in) = a plastoquinol + NADP(+) + n H(+)(out). In terms of biological role, NDH shuttles electrons from NAD(P)H:plastoquinone, via FMN and iron-sulfur (Fe-S) centers, to quinones in the photosynthetic chain and possibly in a chloroplast respiratory chain. The immediate electron acceptor for the enzyme in this species is believed to be plastoquinone. Couples the redox reaction to proton translocation, and thus conserves the redox energy in a proton gradient. In Oryza nivara (Indian wild rice), this protein is NAD(P)H-quinone oxidoreductase subunit H, chloroplastic.